A 917-amino-acid polypeptide reads, in one-letter code: Phosphoenolpyruvate carboxylase (917 aa).

Active-site residues include histidine 145 and lysine 578.

Belongs to the PEPCase type 1 family. Mg(2+) is required as a cofactor.

The catalysed reaction is oxaloacetate + phosphate = phosphoenolpyruvate + hydrogencarbonate. Its function is as follows. Forms oxaloacetate, a four-carbon dicarboxylic acid source for the tricarboxylic acid cycle. In Azoarcus sp. (strain BH72), this protein is Phosphoenolpyruvate carboxylase.